We begin with the raw amino-acid sequence, 333 residues long: GTPase Obg (333 aa).

The region spanning 1-158 (MFIDSAKIYV…RNIDLELKLL (158 aa)) is the Obg domain. Positions 121–143 (HGGKGNQHFATPTNRAPRYSEPA) are disordered. The 165-residue stretch at 159–323 (ADIGLVGFPN…LKDVLWRIIQ (165 aa)) folds into the OBG-type G domain. GTP is bound by residues 165-172 (GFPNAGKS), 190-194 (FTTLE), 212-215 (DIPG), 279-282 (SKMD), and 304-306 (SSV). Mg(2+) is bound by residues Ser-172 and Thr-192.

The protein belongs to the TRAFAC class OBG-HflX-like GTPase superfamily. OBG GTPase family. Monomer. The cofactor is Mg(2+).

It is found in the cytoplasm. Its function is as follows. An essential GTPase which binds GTP, GDP and possibly (p)ppGpp with moderate affinity, with high nucleotide exchange rates and a fairly low GTP hydrolysis rate. Plays a role in control of the cell cycle, stress response, ribosome biogenesis and in those bacteria that undergo differentiation, in morphogenesis control. The protein is GTPase Obg of Chloroherpeton thalassium (strain ATCC 35110 / GB-78).